We begin with the raw amino-acid sequence, 155 residues long: NADPH-dependent 7-cyano-7-deazaguanine reductase (155 aa).

The active-site Thioimide intermediate is Cys53. Asp60 (proton donor) is an active-site residue. Substrate-binding positions include 75–77 and 94–95; these read VES and HE.

This sequence belongs to the GTP cyclohydrolase I family. QueF type 1 subfamily.

It localises to the cytoplasm. The catalysed reaction is 7-aminomethyl-7-carbaguanine + 2 NADP(+) = 7-cyano-7-deazaguanine + 2 NADPH + 3 H(+). Its pathway is tRNA modification; tRNA-queuosine biosynthesis. Its function is as follows. Catalyzes the NADPH-dependent reduction of 7-cyano-7-deazaguanine (preQ0) to 7-aminomethyl-7-deazaguanine (preQ1). This Brucella suis (strain ATCC 23445 / NCTC 10510) protein is NADPH-dependent 7-cyano-7-deazaguanine reductase.